A 917-amino-acid polypeptide reads, in one-letter code: Isoleucine--tRNA ligase (917 aa).

The short motif at 57–67 (PYANGNLHMGH) is the 'HIGH' region element. Position 554 (glutamate 554) interacts with L-isoleucyl-5'-AMP. The 'KMSKS' region motif lies at 595-599 (KMSKS). Position 598 (lysine 598) interacts with ATP. Residues cysteine 886, cysteine 889, cysteine 906, and cysteine 909 each coordinate Zn(2+).

This sequence belongs to the class-I aminoacyl-tRNA synthetase family. IleS type 1 subfamily. Monomer. It depends on Zn(2+) as a cofactor.

The protein resides in the cytoplasm. The catalysed reaction is tRNA(Ile) + L-isoleucine + ATP = L-isoleucyl-tRNA(Ile) + AMP + diphosphate. Catalyzes the attachment of isoleucine to tRNA(Ile). As IleRS can inadvertently accommodate and process structurally similar amino acids such as valine, to avoid such errors it has two additional distinct tRNA(Ile)-dependent editing activities. One activity is designated as 'pretransfer' editing and involves the hydrolysis of activated Val-AMP. The other activity is designated 'posttransfer' editing and involves deacylation of mischarged Val-tRNA(Ile). In Staphylococcus aureus (strain Mu3 / ATCC 700698), this protein is Isoleucine--tRNA ligase.